We begin with the raw amino-acid sequence, 141 residues long: Large ribosomal subunit protein uL11c (141 aa).

It belongs to the universal ribosomal protein uL11 family. In terms of assembly, part of the ribosomal stalk of the 50S ribosomal subunit. Interacts with L10 and the large rRNA to form the base of the stalk. L10 forms an elongated spine to which L12 dimers bind in a sequential fashion forming a multimeric L10(L12)X complex.

Its subcellular location is the plastid. It localises to the chloroplast. Forms part of the ribosomal stalk which helps the ribosome interact with GTP-bound translation factors. In Trieres chinensis (Marine centric diatom), this protein is Large ribosomal subunit protein uL11c.